The primary structure comprises 661 residues: CD180 antigen (661 aa).

Residues Met-1–Ala-20 form the signal peptide. The Extracellular segment spans residues Thr-21–Ser-626. Positions Val-33–Asn-53 constitute an LRRNT domain. Asn-34, Asn-53, Asn-70, and Asn-78 each carry an N-linked (GlcNAc...) asparagine glycan. 7 LRR repeats span residues Ser-54–Arg-75, Asn-78–Ser-99, Arg-102–Gly-123, Ala-126–Asn-147, Thr-150–Pro-171, Lys-174–Ser-195, and Asn-201–Ser-221. N-linked (GlcNAc...) asparagine glycans are attached at residues Asn-201, Asn-244, and Asn-288. LRR repeat units follow at residues Ser-275–Cys-296, Gly-299–Ser-321, Thr-322–Asn-343, Ser-346–Leu-366, and Asn-371–Gln-391. N-linked (GlcNAc...) asparagine glycosylation is found at Asn-394 and Asn-402. LRR repeat units follow at residues His-397–Glu-418, Gln-421–Gln-442, Leu-446–Asp-466, Ala-470–Gln-493, Arg-497–Ser-518, Met-521–Lys-544, and Ile-546–Leu-566. The N-linked (GlcNAc...) asparagine glycan is linked to Asn-451. An LRRCT domain is found at Asn-577–Met-627. A helical transmembrane segment spans residues Met-627–Val-650. The Cytoplasmic segment spans residues Lys-651–Ile-661.

This sequence belongs to the Toll-like receptor family. As to quaternary structure, M-shaped tetramer of two CD180-LY86 heterodimers. B-lymphocytes and spleen. Not detected in thymus, kidney, muscle, heart, brain or liver.

The protein localises to the cell membrane. Its function is as follows. May cooperate with MD-1 and TLR4 to mediate the innate immune response to bacterial lipopolysaccharide (LPS) in B-cells. Leads to NF-kappa-B activation. Also involved in the life/death decision of B-cells. The protein is CD180 antigen (Cd180) of Mus musculus (Mouse).